Reading from the N-terminus, the 211-residue chain is Uridine kinase (211 aa).

12–19 provides a ligand contact to ATP; sequence GGSGSGKT.

The protein belongs to the uridine kinase family.

Its subcellular location is the cytoplasm. It catalyses the reaction uridine + ATP = UMP + ADP + H(+). It carries out the reaction cytidine + ATP = CMP + ADP + H(+). The protein operates within pyrimidine metabolism; CTP biosynthesis via salvage pathway; CTP from cytidine: step 1/3. Its pathway is pyrimidine metabolism; UMP biosynthesis via salvage pathway; UMP from uridine: step 1/1. The polypeptide is Uridine kinase (Geobacillus kaustophilus (strain HTA426)).